A 150-amino-acid chain; its full sequence is Putative HTH-type transcriptional regulator HI_0379 (150 aa).

Residues 2 to 131 (KLTSKGRYAV…NEITLAELVN (130 aa)) form the HTH rrf2-type domain.

The polypeptide is Putative HTH-type transcriptional regulator HI_0379 (Haemophilus influenzae (strain ATCC 51907 / DSM 11121 / KW20 / Rd)).